The primary structure comprises 180 residues: O-acetyl-ADP-ribose deacetylase (180 aa).

One can recognise a Macro domain in the interval 1 to 175 (MSGRINVVQG…LYQRLLGQYD (175 aa)). Substrate is bound by residues 11–12 (DI), Asn-25, 33–35 (GVD), and 122–126 (STGIY). Catalysis depends on Asp-35, which acts as the Proton acceptor.

The protein belongs to the MacroD-type family. YmdB subfamily. In terms of assembly, homodimer. Interacts with RNase III.

The enzyme catalyses 3''-O-acetyl-ADP-D-ribose + H2O = ADP-D-ribose + acetate + H(+). The catalysed reaction is 2''-O-acetyl-ADP-D-ribose + H2O = ADP-D-ribose + acetate + H(+). Deacetylates O-acetyl-ADP ribose to yield ADP-ribose and free acetate. Down-regulates ribonuclease 3 (RNase III) activity. Acts by interacting directly with the region of the ribonuclease that is required for dimerization/activation. The protein is O-acetyl-ADP-ribose deacetylase of Cronobacter sakazakii (strain ATCC BAA-894) (Enterobacter sakazakii).